A 137-amino-acid polypeptide reads, in one-letter code: Acidic phospholipase A2 PL-II (137 aa).

The N-terminal stretch at 1–17 is a signal peptide; it reads AVCVSLLGASSIRPLPL. Intrachain disulfides connect cysteine 28/cysteine 89, cysteine 44/cysteine 136, cysteine 46/cysteine 62, cysteine 61/cysteine 117, cysteine 68/cysteine 110, cysteine 78/cysteine 103, and cysteine 96/cysteine 108. Positions 45, 47, and 49 each coordinate Ca(2+). Histidine 65 is a catalytic residue. Residue aspartate 66 participates in Ca(2+) binding. The active site involves aspartate 111.

Ca(2+) serves as cofactor. In terms of tissue distribution, expressed by the venom gland.

It localises to the secreted. It carries out the reaction a 1,2-diacyl-sn-glycero-3-phosphocholine + H2O = a 1-acyl-sn-glycero-3-phosphocholine + a fatty acid + H(+). Snake venom phospholipase A2 (PLA2) that may act in the hemostasis system of the prey. Exhibits hydrolytic activities, and prefers the anionic micelles (dPPC with deoxycholate) (54 umol/mg/min) to the zwitterionic micelles (dPPC with Triton X-100) (15 umol/mg/min). PLA2 catalyzes the calcium-dependent hydrolysis of the 2-acyl groups in 3-sn-phosphoglycerides. This Walterinnesia aegyptia (Desert black snake) protein is Acidic phospholipase A2 PL-II.